A 267-amino-acid chain; its full sequence is Dihydropteroate synthase (267 aa).

One can recognise a Pterin-binding domain in the interval 1-251; the sequence is MTKTKIMGIL…NVELNAKLAK (251 aa). Asparagine 11 is a binding site for Mg(2+). Residues threonine 51, aspartate 84, asparagine 103, aspartate 167, lysine 203, and 239–241 each bind (7,8-dihydropterin-6-yl)methyl diphosphate; that span reads RVH.

Belongs to the DHPS family. As to quaternary structure, homodimer. Mg(2+) is required as a cofactor.

The catalysed reaction is (7,8-dihydropterin-6-yl)methyl diphosphate + 4-aminobenzoate = 7,8-dihydropteroate + diphosphate. Its pathway is cofactor biosynthesis; tetrahydrofolate biosynthesis; 7,8-dihydrofolate from 2-amino-4-hydroxy-6-hydroxymethyl-7,8-dihydropteridine diphosphate and 4-aminobenzoate: step 1/2. Catalyzes the condensation of para-aminobenzoate (pABA) with 6-hydroxymethyl-7,8-dihydropterin diphosphate (DHPt-PP) to form 7,8-dihydropteroate (H2Pte), the immediate precursor of folate derivatives. In Staphylococcus aureus (strain Mu50 / ATCC 700699), this protein is Dihydropteroate synthase (folP).